The chain runs to 42 residues: Potassium channel toxin gamma-KTx 1.10 (42 aa).

4 disulfides stabilise this stretch: cysteine 5–cysteine 23, cysteine 11–cysteine 34, cysteine 20–cysteine 39, and cysteine 24–cysteine 41.

In terms of tissue distribution, expressed by the venom gland.

It is found in the secreted. In terms of biological role, blocks human Kv11.1/KCNH2/ERG1 potassium channels (reversible, IC(50)=3.4 nM). At high toxin concentrations, block of Kv11.1/KCNH2/ERG1 macroscopic current is almost complete. Does not accelerate the kinetics of the closing process and has no effect on the activation and inactivation kinetics of the Kv11.1/KCNH2/ERG1 channels. The polypeptide is Potassium channel toxin gamma-KTx 1.10 (Centruroides margaritatus (Central American bark Scorpion)).